We begin with the raw amino-acid sequence, 238 residues long: Probable transcriptional regulatory protein HH_1604 (238 aa).

This sequence belongs to the TACO1 family.

It localises to the cytoplasm. This Helicobacter hepaticus (strain ATCC 51449 / 3B1) protein is Probable transcriptional regulatory protein HH_1604.